We begin with the raw amino-acid sequence, 283 residues long: Pantothenate synthetase (283 aa).

30–37 is an ATP binding site; that stretch reads MGNLHSGH. H37 (proton donor) is an active-site residue. Residue Q61 participates in (R)-pantoate binding. Q61 is a beta-alanine binding site. 149-152 lines the ATP pocket; that stretch reads GEKD. Residue Q155 participates in (R)-pantoate binding. ATP contacts are provided by residues V178 and 186–189; that span reads LSSR.

The protein belongs to the pantothenate synthetase family. Homodimer.

The protein localises to the cytoplasm. The catalysed reaction is (R)-pantoate + beta-alanine + ATP = (R)-pantothenate + AMP + diphosphate + H(+). It functions in the pathway cofactor biosynthesis; (R)-pantothenate biosynthesis; (R)-pantothenate from (R)-pantoate and beta-alanine: step 1/1. Functionally, catalyzes the condensation of pantoate with beta-alanine in an ATP-dependent reaction via a pantoyl-adenylate intermediate. This is Pantothenate synthetase from Pseudomonas savastanoi pv. phaseolicola (strain 1448A / Race 6) (Pseudomonas syringae pv. phaseolicola (strain 1448A / Race 6)).